Reading from the N-terminus, the 264-residue chain is tRNA (guanine-N(1)-)-methyltransferase (264 aa).

S-adenosyl-L-methionine-binding positions include Gly-125 and 145–150 (LGDFVL).

Belongs to the RNA methyltransferase TrmD family. In terms of assembly, homodimer.

The protein localises to the cytoplasm. The catalysed reaction is guanosine(37) in tRNA + S-adenosyl-L-methionine = N(1)-methylguanosine(37) in tRNA + S-adenosyl-L-homocysteine + H(+). Specifically methylates guanosine-37 in various tRNAs. This chain is tRNA (guanine-N(1)-)-methyltransferase, found in Burkholderia vietnamiensis (strain G4 / LMG 22486) (Burkholderia cepacia (strain R1808)).